The primary structure comprises 264 residues: Thymidylate synthase (264 aa).

DUMP is bound at residue R21. Residue H51 participates in (6R)-5,10-methylene-5,6,7,8-tetrahydrofolate binding. DUMP is bound at residue 126-127 (RR). Catalysis depends on C146, which acts as the Nucleophile. DUMP is bound by residues 166–169 (RSCD), N177, and 207–209 (HLY). D169 contacts (6R)-5,10-methylene-5,6,7,8-tetrahydrofolate. A263 is a (6R)-5,10-methylene-5,6,7,8-tetrahydrofolate binding site.

The protein belongs to the thymidylate synthase family. Bacterial-type ThyA subfamily. As to quaternary structure, homodimer.

The protein resides in the cytoplasm. It carries out the reaction dUMP + (6R)-5,10-methylene-5,6,7,8-tetrahydrofolate = 7,8-dihydrofolate + dTMP. Its pathway is pyrimidine metabolism; dTTP biosynthesis. Catalyzes the reductive methylation of 2'-deoxyuridine-5'-monophosphate (dUMP) to 2'-deoxythymidine-5'-monophosphate (dTMP) while utilizing 5,10-methylenetetrahydrofolate (mTHF) as the methyl donor and reductant in the reaction, yielding dihydrofolate (DHF) as a by-product. This enzymatic reaction provides an intracellular de novo source of dTMP, an essential precursor for DNA biosynthesis. The chain is Thymidylate synthase from Salmonella typhimurium (strain LT2 / SGSC1412 / ATCC 700720).